The sequence spans 426 residues: Gamma-glutamyl phosphate reductase (426 aa).

The protein belongs to the gamma-glutamyl phosphate reductase family.

The protein localises to the cytoplasm. The catalysed reaction is L-glutamate 5-semialdehyde + phosphate + NADP(+) = L-glutamyl 5-phosphate + NADPH + H(+). Its pathway is amino-acid biosynthesis; L-proline biosynthesis; L-glutamate 5-semialdehyde from L-glutamate: step 2/2. In terms of biological role, catalyzes the NADPH-dependent reduction of L-glutamate 5-phosphate into L-glutamate 5-semialdehyde and phosphate. The product spontaneously undergoes cyclization to form 1-pyrroline-5-carboxylate. The protein is Gamma-glutamyl phosphate reductase of Delftia acidovorans (strain DSM 14801 / SPH-1).